The chain runs to 568 residues: Urocanate hydratase (568 aa).

NAD(+) is bound by residues 58–59 (GG), Gln-136, 182–184 (GMG), Glu-202, Arg-207, 248–249 (NA), 269–273 (QTSAH), 279–280 (YL), and Tyr-328. Cys-416 is an active-site residue. Residue Gly-498 coordinates NAD(+).

Belongs to the urocanase family. It depends on NAD(+) as a cofactor.

Its subcellular location is the cytoplasm. It catalyses the reaction 4-imidazolone-5-propanoate = trans-urocanate + H2O. It participates in amino-acid degradation; L-histidine degradation into L-glutamate; N-formimidoyl-L-glutamate from L-histidine: step 2/3. In terms of biological role, catalyzes the conversion of urocanate to 4-imidazolone-5-propionate. In Photobacterium profundum (strain SS9), this protein is Urocanate hydratase.